A 530-amino-acid chain; its full sequence is uncharacterized protein (530 aa).

Belongs to the protein kinase superfamily. ADCK protein kinase family.

This is an uncharacterized protein from Clostridium pasteurianum.